The sequence spans 923 residues: Protein prickle (923 aa).

The disordered stretch occupies residues 1 to 196 (MSYPYQKSHH…HPFHSPASAA (196 aa)). Low complexity predominate over residues 11-34 (QTQQPQQNGHPQHQLMLQQQQQAD). Residues 37–49 (PHHHHHHHVHHAT) show a composition bias toward basic residues. Composition is skewed to low complexity over residues 59–73 (RSPL…LYSG) and 106–118 (MPGM…PPGM). Positions 122–134 (LGGGGGGGGGGSA) are enriched in gly residues. Composition is skewed to low complexity over residues 152-169 (STVT…SARS) and 184-196 (SSHH…ASAA). The region spanning 275–383 (GGGHNYSQSD…TVKQITTTLI (109 aa)) is the PET domain. 3 consecutive LIM zinc-binding domains span residues 382-446 (LICE…ETLK), 447-507 (PRCS…MFAE), and 508-570 (YCDY…GEPP). 2 disordered regions span residues 571–668 (TPSD…LDLT) and 703–867 (GPIA…SSAD). Positions 709–718 (NGNGPTGGGP) are enriched in gly residues. A compositionally biased stretch (polar residues) spans 738–748 (ESPSFSGTNSP). Over residues 777-786 (HSIKEVRFEG) the composition is skewed to basic and acidic residues. Positions 792-805 (LPRTKSYCQRNGGQ) are enriched in polar residues. Positions 817–827 (SDDDELAEDET) are enriched in acidic residues. Basic and acidic residues predominate over residues 840–852 (QREQQRPVDDSDA). The span at 853–865 (RSVCSTCSSSSSS) shows a compositional bias: low complexity.

Belongs to the prickle / espinas / testin family. As to quaternary structure, interacts with dsh; PET and LIM domains interact with dsh DEP domain, in wing cells. Interacts with Vang in photoreceptor cells.

The protein localises to the cell membrane. In terms of biological role, acts in a planar cell polarity (PCP) complex; polarization along the apical/basal axis of epithelial cells. PCP signaling in the wing disk requires the receptor fz and the cytoplasmic proteins dsh and pk. These act in a feedback loop leading to activation of the jnk cascade and subsequent polarized arrangement of hairs and bristles. Dgo and pk compete with one another for dsh binding, thereby modulating fz dsh activity and ensuring tight control over fz PCP signaling. Vang, stan and pk function together to regulate the establishment of tissue polarity in the adult eye. This chain is Protein prickle, found in Anopheles gambiae (African malaria mosquito).